Reading from the N-terminus, the 395-residue chain is MGIKHLFQVIQENAPDAIKAGDIKNHFGRKVAIDASMSIYSFLIAVRSEGQQLMSESGETTSHLMGMFYRTLRMVDNGIKPLYVFDGAPPKLKSGELAKRTARKAEATEAHEEAKETGTAEDVEKFSRRTVRVTREHNAECKKLLKLMGIPYIDAPTEAEAQCAVLARAGKVYAAASEDMDTLCFEAPILLRHLTFSEQRKEPIQEIHLNRALEGLGMDRKQFIDLCILLGCDYLEPIPKVGPNTALKLIREHGSLEKVVEAIENDPKKKYVIPEYWPYQDARELFLHPDVREADHPECDFKWEAPDVEALVEFLVKDKGFNEDRVRNGATRLQKNLKTAQQSRLEGFFKPVARTDEEKASLKRKHDEKLQEQKKRKKEEAKAKKEAKAKPRGAA.

The N-domain stretch occupies residues 1 to 104 (MGIKHLFQVI…GELAKRTARK (104 aa)). Residue Asp-34 coordinates Mg(2+). Residues Arg-47 and Arg-70 each coordinate DNA. Residue Asp-86 coordinates Mg(2+). Residues 102–121 (ARKAEATEAHEEAKETGTAE) are disordered. An I-domain region spans residues 122–253 (DVEKFSRRTV…NTALKLIREH (132 aa)). Positions 158, 160, 179, and 181 each coordinate Mg(2+). Glu-158 is a binding site for DNA. Positions 231 and 233 each coordinate DNA. Residue Asp-233 coordinates Mg(2+). The interval 341 to 349 (QQSRLEGFF) is interaction with PCNA. Positions 348-395 (FFKPVARTDEEKASLKRKHDEKLQEQKKRKKEEAKAKKEAKAKPRGAA) are disordered. The span at 353-389 (ARTDEEKASLKRKHDEKLQEQKKRKKEEAKAKKEAKA) shows a compositional bias: basic and acidic residues.

Belongs to the XPG/RAD2 endonuclease family. FEN1 subfamily. In terms of assembly, interacts with PCNA. Three molecules of fen1 bind to one PCNA trimer with each molecule binding to one PCNA monomer. PCNA stimulates the nuclease activity without altering cleavage specificity. Mg(2+) is required as a cofactor. Post-translationally, phosphorylated. Phosphorylation upon DNA damage induces relocalization to the nuclear plasma.

The protein resides in the nucleus. It localises to the nucleolus. It is found in the nucleoplasm. The protein localises to the mitochondrion. Structure-specific nuclease with 5'-flap endonuclease and 5'-3' exonuclease activities involved in DNA replication and repair. During DNA replication, cleaves the 5'-overhanging flap structure that is generated by displacement synthesis when DNA polymerase encounters the 5'-end of a downstream Okazaki fragment. It enters the flap from the 5'-end and then tracks to cleave the flap base, leaving a nick for ligation. Also involved in the long patch base excision repair (LP-BER) pathway, by cleaving within the apurinic/apyrimidinic (AP) site-terminated flap. Acts as a genome stabilization factor that prevents flaps from equilibrating into structures that lead to duplications and deletions. Also possesses 5'-3' exonuclease activity on nicked or gapped double-stranded DNA, and exhibits RNase H activity. Also involved in replication and repair of rDNA and in repairing mitochondrial DNA. The sequence is that of Flap endonuclease 1 (fen1) from Aspergillus fumigatus (strain ATCC MYA-4609 / CBS 101355 / FGSC A1100 / Af293) (Neosartorya fumigata).